A 295-amino-acid chain; its full sequence is Small ribosomal subunit biogenesis GTPase RsgA (295 aa).

Residues 65–223 (KNQLVRPPVA…VLDTPGFTAL (159 aa)) form the CP-type G domain. GTP-binding positions include 114–117 (NKVD) and 165–173 (GPSGVGKSS). The Zn(2+) site is built by C246, C251, H253, and C259.

Belongs to the TRAFAC class YlqF/YawG GTPase family. RsgA subfamily. As to quaternary structure, monomer. Associates with 30S ribosomal subunit, binds 16S rRNA. It depends on Zn(2+) as a cofactor.

The protein resides in the cytoplasm. Its function is as follows. One of several proteins that assist in the late maturation steps of the functional core of the 30S ribosomal subunit. Helps release RbfA from mature subunits. May play a role in the assembly of ribosomal proteins into the subunit. Circularly permuted GTPase that catalyzes slow GTP hydrolysis, GTPase activity is stimulated by the 30S ribosomal subunit. The sequence is that of Small ribosomal subunit biogenesis GTPase RsgA from Caldanaerobacter subterraneus subsp. tengcongensis (strain DSM 15242 / JCM 11007 / NBRC 100824 / MB4) (Thermoanaerobacter tengcongensis).